The sequence spans 219 residues: Probable nicotinate-nucleotide adenylyltransferase (219 aa).

The protein belongs to the NadD family.

It catalyses the reaction nicotinate beta-D-ribonucleotide + ATP + H(+) = deamido-NAD(+) + diphosphate. It participates in cofactor biosynthesis; NAD(+) biosynthesis; deamido-NAD(+) from nicotinate D-ribonucleotide: step 1/1. In terms of biological role, catalyzes the reversible adenylation of nicotinate mononucleotide (NaMN) to nicotinic acid adenine dinucleotide (NaAD). The chain is Probable nicotinate-nucleotide adenylyltransferase from Chromohalobacter salexigens (strain ATCC BAA-138 / DSM 3043 / CIP 106854 / NCIMB 13768 / 1H11).